The primary structure comprises 263 residues: Acyl-[acyl-carrier-protein]--UDP-N-acetylglucosamine O-acyltransferase (263 aa).

Belongs to the transferase hexapeptide repeat family. LpxA subfamily. In terms of assembly, homotrimer.

Its subcellular location is the cytoplasm. It carries out the reaction a (3R)-hydroxyacyl-[ACP] + UDP-N-acetyl-alpha-D-glucosamine = a UDP-3-O-[(3R)-3-hydroxyacyl]-N-acetyl-alpha-D-glucosamine + holo-[ACP]. The protein operates within glycolipid biosynthesis; lipid IV(A) biosynthesis; lipid IV(A) from (3R)-3-hydroxytetradecanoyl-[acyl-carrier-protein] and UDP-N-acetyl-alpha-D-glucosamine: step 1/6. Involved in the biosynthesis of lipid A, a phosphorylated glycolipid that anchors the lipopolysaccharide to the outer membrane of the cell. In Campylobacter jejuni (strain RM1221), this protein is Acyl-[acyl-carrier-protein]--UDP-N-acetylglucosamine O-acyltransferase.